The primary structure comprises 101 residues: Glutaredoxin-1 (101 aa).

The Glutaredoxin domain maps to 5 to 101 (KDRVEKLIQT…GSLSKMIAAL (97 aa)). Cys25 and Cys28 form a disulfide bridge.

This sequence belongs to the glutaredoxin family.

The protein localises to the cytoplasm. The protein resides in the cytosol. In terms of biological role, multifunctional enzyme with glutathione-dependent oxidoreductase, glutathione peroxidase and glutathione S-transferase (GST) activity. The disulfide bond functions as an electron carrier in the glutathione-dependent synthesis of deoxyribonucleotides by the enzyme ribonucleotide reductase. In addition, it is also involved in reducing cytosolic protein- and non-protein-disulfides in a coupled system with glutathione reductase. May play a role in protection against oxidative stress caused by superoxide in vivo by regulating the redox state of the protein sulfhydryl groups. The protein is Glutaredoxin-1 of Rhizophagus irregularis (strain DAOM 181602 / DAOM 197198 / MUCL 43194) (Arbuscular mycorrhizal fungus).